Consider the following 1274-residue polypeptide: DENN domain-containing protein 3 (1274 aa).

Positions 65-108 (GQVPGASCALGKGRRRSFRKKREKPRMEPWKSHPGDSKGPDSED) are disordered. In terms of domain architecture, uDENN spans 75–245 (GKGRRRSFRK…LIPSPPPGPL (171 aa)). Over residues 76–88 (KGRRRSFRKKREK) the composition is skewed to basic residues. Residues 89-105 (PRMEPWKSHPGDSKGPD) show a composition bias toward basic and acidic residues. The 133-residue stretch at 268 to 400 (IVDLDLHLPL…PLLLAQTFIQ (133 aa)) folds into the cDENN domain. A dDENN domain is found at 402–506 (VQSLQLHPDL…KARLNGRMDA (105 aa)). The linker stretch occupies residues 520–970 (RIDRMLISPR…KHKINPSAGE (451 aa)). Residues serine 554 and serine 572 each carry the phosphoserine; by ULK1 modification. Phosphotyrosine is present on tyrosine 940. WD repeat units follow at residues 975 to 1013 (AIEV…VFDA), 1019 to 1055 (HQHC…IINV), 1059 to 1099 (SCNK…AWNV), 1103 to 1140 (RVIS…TPQG), 1146 to 1181 (LKHP…MWSL), 1186 to 1228 (QPPQ…IYVM), and 1234 to 1273 (TVEK…IWKV).

As to quaternary structure, forms oligomers. Interacts with 6 of the 7 known isoforms of 14-3-3 proteins.

The protein resides in the cytoplasm. Its function is as follows. Guanine nucleotide exchange factor (GEF) activating Rab12. Promotes the exchange of GDP to GTP, converting inactive GDP-bound Rab12 into its active GTP-bound form. Regulates autophagy in response to starvation through Rab12 activation. Starvation leads to ULK1/2-dependent phosphorylation of Ser-554 and Ser-572, which in turn allows recruitment of 14-3-3 adapter proteins and leads to up-regulation of GEF activity towards Rab12. Also plays a role in protein transport from recycling endosomes to lysosomes, regulating, for instance, the degradation of the transferrin receptor and of the amino acid transporter PAT4. Starvation also induces phosphorylation at Tyr-940, which leads to up-regulated GEF activity and initiates autophagy. The protein is DENN domain-containing protein 3 (Dennd3) of Mus musculus (Mouse).